The primary structure comprises 232 residues: 26.5 kDa heat shock protein, mitochondrial (232 aa).

Residues 1–42 constitute a mitochondrion transit peptide; it reads MALARLALRNLQQKLSPSLMGQSCERGLVGNRHNPMKLNRFM. The interval 44 to 82 is disordered; the sequence is TSAGEQEDKMNTEVSVSEKKSPRQNFPRRRGRKSLWRNT. The segment covering 49-64 has biased composition (basic and acidic residues); sequence QEDKMNTEVSVSEKKS. Basic residues predominate over residues 69–78; sequence FPRRRGRKSL. Residues 114–232 enclose the sHSP domain; sequence IFDNFNVNPF…KKNVQEISVE (119 aa).

The protein belongs to the small heat shock protein (HSP20) family. As to quaternary structure, may form oligomeric structures.

The protein resides in the mitochondrion. The protein is 26.5 kDa heat shock protein, mitochondrial (HSP26.5) of Arabidopsis thaliana (Mouse-ear cress).